The chain runs to 144 residues: Granulocyte-macrophage colony-stimulating factor (144 aa).

Residues 1–17 (MWLQNLLFLGTVVCSIS) form the signal peptide. Serine 22 carries an O-linked (GalNAc...) serine glycan. An O-linked (GalNAc...) threonine glycan is attached at threonine 27. N-linked (GlcNAc...) asparagine glycosylation is present at asparagine 44. Intrachain disulfides connect cysteine 71–cysteine 113 and cysteine 105–cysteine 138.

Belongs to the GM-CSF family. As to quaternary structure, monomer. The signaling GM-CSF receptor complex is a dodecamer of two head-to-head hexamers of two alpha, two beta, and two ligand subunits.

The protein resides in the secreted. Cytokine that stimulates the growth and differentiation of hematopoietic precursor cells from various lineages, including granulocytes, macrophages, eosinophils and erythrocytes. The chain is Granulocyte-macrophage colony-stimulating factor (CSF2) from Canis lupus familiaris (Dog).